A 163-amino-acid chain; its full sequence is Glyoxalase domain-containing protein 5 (163 aa).

In terms of domain architecture, VOC spans 41 to 161; it reads HLDHLVLTVR…DDNLIEVSNY (121 aa).

The protein belongs to the glyoxalase I family.

In Danio rerio (Zebrafish), this protein is Glyoxalase domain-containing protein 5 (glod5).